A 196-amino-acid polypeptide reads, in one-letter code: Probable thymidylate kinase (196 aa).

7–14 lines the ATP pocket; sequence GIDGSGKS.

This sequence belongs to the thymidylate kinase family.

The catalysed reaction is dTMP + ATP = dTDP + ADP. The sequence is that of Probable thymidylate kinase from Natronomonas pharaonis (strain ATCC 35678 / DSM 2160 / CIP 103997 / JCM 8858 / NBRC 14720 / NCIMB 2260 / Gabara) (Halobacterium pharaonis).